The chain runs to 2111 residues: Glutamate synthase [NADH] (2111 aa).

The active-site Nucleophile is C69. Positions 69 to 469 constitute a Glutamine amidotransferase type-2 domain; it reads CGVGFTCHIK…PGRMLLVDTK (401 aa). The segment at 969–990 is disordered; that stretch reads GGKSNTGEGGEDPARSQRLANG. 1139-1191 contributes to the FMN binding site; the sequence is VAETHQTLVLNDLRGRVVIQTDGQIRTGRDVAIACLLGAEEWGFATTPLIALG. [3Fe-4S] cluster-binding residues include C1192, C1198, and C1203.

Belongs to the glutamate synthase family. In terms of assembly, homotrimer. It depends on [3Fe-4S] cluster as a cofactor. FAD is required as a cofactor. Requires FMN as cofactor.

The protein resides in the cytoplasm. The catalysed reaction is 2 L-glutamate + NAD(+) = L-glutamine + 2-oxoglutarate + NADH + H(+). It functions in the pathway amino-acid biosynthesis; L-glutamate biosynthesis via GLT pathway; L-glutamate from 2-oxoglutarate and L-glutamine (NAD(+) route): step 1/1. It participates in energy metabolism; nitrogen metabolism. Its activity is regulated as follows. In the presence of 10 mM allantoin, the activity is reduced more than 25%. Functionally, forms L-glutamate from L-glutamine and 2-oxoglutarate. Represents an alternative pathway to L-glutamate dehydrogenase for the biosynthesis of L-glutamate. Participates with glutamine synthetase in ammonia assimilation processes. The enzyme is specific for NADH, L-glutamine and 2-oxoglutarate. The sequence is that of Glutamate synthase [NADH] (glt1) from Schizosaccharomyces pombe (strain 972 / ATCC 24843) (Fission yeast).